Reading from the N-terminus, the 373-residue chain is Chorismate synthase (373 aa).

Residue R46 coordinates NADP(+). FMN contacts are provided by residues 123–125, 251–252, G295, 310–314, and R337; these read RSS, NA, and KPTPS.

This sequence belongs to the chorismate synthase family. It depends on FMNH2 as a cofactor.

It carries out the reaction 5-O-(1-carboxyvinyl)-3-phosphoshikimate = chorismate + phosphate. It functions in the pathway metabolic intermediate biosynthesis; chorismate biosynthesis; chorismate from D-erythrose 4-phosphate and phosphoenolpyruvate: step 7/7. Its function is as follows. Catalyzes the anti-1,4-elimination of the C-3 phosphate and the C-6 proR hydrogen from 5-enolpyruvylshikimate-3-phosphate (EPSP) to yield chorismate, which is the branch point compound that serves as the starting substrate for the three terminal pathways of aromatic amino acid biosynthesis. This reaction introduces a second double bond into the aromatic ring system. In Methanococcus maripaludis (strain C7 / ATCC BAA-1331), this protein is Chorismate synthase.